The sequence spans 212 residues: HTH-type transcriptional regulatory protein RaaS (212 aa).

One can recognise an HTH tetR-type domain in the interval 6 to 65 (LTAHARIREAAIEQFGRHGFGVGLRAIAEAAGVSAALVIHHFGSKEGLRKACDDFVAEEI). Positions 28 to 47 (GLRAIAEAAGVSAALVIHHF) form a DNA-binding region, H-T-H motif.

In terms of assembly, homodimer. Interacts with long chain acyl-CoA derivatives. Interacts with several drugs such rhodamine 6G, ethidium and safranin O.

With respect to regulation, interaction with long chain acyl-CoA derivatives (oleoyl-CoA and, to lesser extent, stearoyl-CoA) prevents binding to DNA, leading to the expression of the target genes. Long chain acyl-CoA derivatives may serve as biological indicators of the bacterial metabolic state. Regulates the expression of the Rv1217c-Rv1218c multidrug efflux system and its own expression. Acts by binding to promoter regions of Rv1219c and upstream of the Rv1218c gene. Important for survival in prolonged stationary phase and during macrophage infection. May be used to eliminate non-growing mycobacteria. This is HTH-type transcriptional regulatory protein RaaS from Mycobacterium tuberculosis (strain ATCC 25618 / H37Rv).